The sequence spans 219 residues: Elongation factor Ts (219 aa).

Residues 82–85 (TDFV) form an involved in Mg(2+) ion dislocation from EF-Tu region.

The protein belongs to the EF-Ts family.

The protein resides in the cytoplasm. Associates with the EF-Tu.GDP complex and induces the exchange of GDP to GTP. It remains bound to the aminoacyl-tRNA.EF-Tu.GTP complex up to the GTP hydrolysis stage on the ribosome. The protein is Elongation factor Ts of Anaeromyxobacter dehalogenans (strain 2CP-1 / ATCC BAA-258).